The primary structure comprises 370 residues: UDP-N-acetylglucosamine--N-acetylmuramyl-(pentapeptide) pyrophosphoryl-undecaprenol N-acetylglucosamine transferase (370 aa).

Residues 10 to 12 (TGG), N124, S196, I253, and Q298 each bind UDP-N-acetyl-alpha-D-glucosamine.

It belongs to the glycosyltransferase 28 family. MurG subfamily.

The protein localises to the cell membrane. It carries out the reaction Mur2Ac(oyl-L-Ala-gamma-D-Glu-L-Lys-D-Ala-D-Ala)-di-trans,octa-cis-undecaprenyl diphosphate + UDP-N-acetyl-alpha-D-glucosamine = beta-D-GlcNAc-(1-&gt;4)-Mur2Ac(oyl-L-Ala-gamma-D-Glu-L-Lys-D-Ala-D-Ala)-di-trans,octa-cis-undecaprenyl diphosphate + UDP + H(+). The protein operates within cell wall biogenesis; peptidoglycan biosynthesis. Its function is as follows. Cell wall formation. Catalyzes the transfer of a GlcNAc subunit on undecaprenyl-pyrophosphoryl-MurNAc-pentapeptide (lipid intermediate I) to form undecaprenyl-pyrophosphoryl-MurNAc-(pentapeptide)GlcNAc (lipid intermediate II). The sequence is that of UDP-N-acetylglucosamine--N-acetylmuramyl-(pentapeptide) pyrophosphoryl-undecaprenol N-acetylglucosamine transferase from Limosilactobacillus reuteri subsp. reuteri (strain JCM 1112) (Lactobacillus reuteri).